The primary structure comprises 126 residues: Large ribosomal subunit protein bL12 (126 aa).

The protein belongs to the bacterial ribosomal protein bL12 family. Homodimer. Part of the ribosomal stalk of the 50S ribosomal subunit. Forms a multimeric L10(L12)X complex, where L10 forms an elongated spine to which 2 to 4 L12 dimers bind in a sequential fashion. Binds GTP-bound translation factors.

In terms of biological role, forms part of the ribosomal stalk which helps the ribosome interact with GTP-bound translation factors. Is thus essential for accurate translation. The chain is Large ribosomal subunit protein bL12 from Paracidovorax citrulli (strain AAC00-1) (Acidovorax citrulli).